We begin with the raw amino-acid sequence, 305 residues long: Syntaxin-123 (305 aa).

Position 1 is an N-acetylmethionine (M1). Residues 1–278 (MNDLISSSFK…KVLQRNNRKW (278 aa)) lie on the Cytoplasmic side of the membrane. A coiled-coil region spans residues 46–66 (VKEDMKAVDEIHKRLQDANEE). A t-SNARE coiled-coil homology domain is found at 206-268 (LSEIQERHDT…MRGTDQLHGA (63 aa)). A helical; Anchor for type IV membrane protein membrane pass occupies residues 279–299 (ACIATILAIVVVIVILFPILF). Residues 300 to 305 (NTLLRP) are Vesicular-facing.

The protein belongs to the syntaxin family. As to quaternary structure, part of the t-SNARE complex. Expressed in tips of root hairs.

The protein localises to the membrane. Its function is as follows. Vesicle trafficking protein that functions in the secretory pathway. Acts in coordination with SYP132 to mediate tip-focused membrane trafficking for root hair tip growth. Functions in root hair elongation by forming SNARE complexes with VAMP721,VAMP722 or VAMP724. In Arabidopsis thaliana (Mouse-ear cress), this protein is Syntaxin-123.